The sequence spans 229 residues: Small ribosomal subunit protein uS3 (229 aa).

One can recognise a KH type-2 domain in the interval 39 to 107; that stretch reads VRQFLIKELK…PAQINISEVR (69 aa).

This sequence belongs to the universal ribosomal protein uS3 family. As to quaternary structure, part of the 30S ribosomal subunit. Forms a tight complex with proteins S10 and S14.

Binds the lower part of the 30S subunit head. Binds mRNA in the 70S ribosome, positioning it for translation. The protein is Small ribosomal subunit protein uS3 of Photobacterium profundum (strain SS9).